The following is a 601-amino-acid chain: Dual specificity tyrosine-phosphorylation-regulated kinase 2 (601 aa).

The interval 1–24 (MLTRKPSAAAPAAYPTGRGGDSAV) is disordered. S30 is subject to Phosphoserine. T106 is subject to Phosphothreonine; by ATM. Residues 189–191 (KKR) carry the Nuclear localization signal motif. Positions 222 to 535 (YEVLKVIGKG…PGQALRHPWL (314 aa)) constitute a Protein kinase domain. Residues 228–236 (IGKGSFGQV), K251, and 301–304 (FELL) contribute to the ATP site. D348 serves as the catalytic Proton acceptor. At T381 the chain carries Phosphothreonine; by MAP3K10. The residue at position 382 (Y382) is a Phosphotyrosine; by autocatalysis. At S442 the chain carries Phosphoserine; by ATM. S449 is modified (phosphoserine; by MAP3K10).

Belongs to the protein kinase superfamily. CMGC Ser/Thr protein kinase family. MNB/DYRK subfamily. In terms of assembly, component of an E3 ligase complex containing DYRK2, EDD/UBR5, DDB1 and DCAF1 (EDVP complex). Interacts directly with EDD/UBR5, DDB1 and DCAF1. Interacts with SIAH2 and MDM2. Interacts with MAP3K10 and NFATC1. May also interact with CCNL2. It depends on Mg(2+) as a cofactor. The cofactor is Mn(2+). In terms of processing, autophosphorylates cotranslationally on the second tyrosine residue in the Tyr-X-Tyr motif in the activation loop, but once mature, does not have any protein tyrosine kinase activity. Phosphorylated at Thr-106 and Ser-442 by ATM in response to genotoxic stress. Post-translationally, under normal conditions, polyubiquitinated in the nucleus by MDM2, leading to its proteasomal degradation. Phosphorylation on Thr-106 and Ser-442 by ATM in response to genotoxic stress disrupts MDM2 binding and prevents MDM2-mediated ubiquitination and subsequent proteasomal degradation. Polyubiquitinated by SIAH2, leading to its proteasomal degradation. Polyubiquitinated by SIAH2 occurs under normal conditions, and is enhanced in response to hypoxia. In terms of tissue distribution, testis, after the onset of spermatogenesis.

It localises to the cytoplasm. Its subcellular location is the nucleus. The catalysed reaction is L-seryl-[protein] + ATP = O-phospho-L-seryl-[protein] + ADP + H(+). The enzyme catalyses L-threonyl-[protein] + ATP = O-phospho-L-threonyl-[protein] + ADP + H(+). It catalyses the reaction L-tyrosyl-[protein] + ATP = O-phospho-L-tyrosyl-[protein] + ADP + H(+). With respect to regulation, activated by autophosphorylation on the second tyrosine residue in the Tyr-X-Tyr motif in the activation loop. Inhibited by acridine analogs, purvalanol, and barely by harmine. Inhibited by leucettine and leucettine derivatives. In terms of biological role, serine/threonine-protein kinase involved in the regulation of the mitotic cell cycle, cell proliferation, apoptosis, organization of the cytoskeleton and neurite outgrowth. Functions in part via its role in ubiquitin-dependent proteasomal protein degradation. Functions downstream of ATM and phosphorylates p53/TP53 at 'Ser-46', and thereby contributes to the induction of apoptosis in response to DNA damage. Phosphorylates NFATC1, and thereby inhibits its accumulation in the nucleus and its transcription factor activity. Phosphorylates EIF2B5 at 'Ser-544', enabling its subsequent phosphorylation and inhibition by GSK3B. Likewise, phosphorylation of NFATC1, CRMP2/DPYSL2 and CRMP4/DPYSL3 promotes their subsequent phosphorylation by GSK3B. May play a general role in the priming of GSK3 substrates. Inactivates GYS1 by phosphorylation at 'Ser-641', and potentially also a second phosphorylation site, thus regulating glycogen synthesis. Mediates EDVP E3 ligase complex formation and is required for the phosphorylation and subsequent degradation of KATNA1. Phosphorylates TERT at 'Ser-457', promoting TERT ubiquitination by the EDVP complex. Phosphorylates SIAH2, and thereby increases its ubiquitin ligase activity. Promotes the proteasomal degradation of MYC and JUN, and thereby regulates progress through the mitotic cell cycle and cell proliferation. Promotes proteasomal degradation of GLI2 and GLI3, and thereby plays a role in smoothened and sonic hedgehog signaling. Plays a role in cytoskeleton organization and neurite outgrowth via its phosphorylation of DCX and DPYSL2. Phosphorylates CRMP2/DPYSL2, CRMP4/DPYSL3, DCX, EIF2B5, EIF4EBP1, GLI2, GLI3, GYS1, JUN, MDM2, MYC, NFATC1, p53/TP53, TAU/MAPT and KATNA1. Can phosphorylate histone H1, histone H3 and histone H2B (in vitro). Can phosphorylate CARHSP1 (in vitro). The chain is Dual specificity tyrosine-phosphorylation-regulated kinase 2 (DYRK2) from Homo sapiens (Human).